The following is a 143-amino-acid chain: Transcriptional regulator MraZ (143 aa).

2 SpoVT-AbrB domains span residues 5-47 (THTP…PMQE) and 76-119 (ASSE…DLRT).

It belongs to the MraZ family. In terms of assembly, forms oligomers.

The protein resides in the cytoplasm. Its subcellular location is the nucleoid. The chain is Transcriptional regulator MraZ from Kineococcus radiotolerans (strain ATCC BAA-149 / DSM 14245 / SRS30216).